A 185-amino-acid chain; its full sequence is Large ribosomal subunit protein uL5 (185 aa).

The protein belongs to the universal ribosomal protein uL5 family. Part of the 50S ribosomal subunit; part of the 5S rRNA/L5/L18/L25 subcomplex. Contacts the 5S rRNA and the P site tRNA. Forms a bridge to the 30S subunit in the 70S ribosome.

In terms of biological role, this is one of the proteins that bind and probably mediate the attachment of the 5S RNA into the large ribosomal subunit, where it forms part of the central protuberance. In the 70S ribosome it contacts protein S13 of the 30S subunit (bridge B1b), connecting the 2 subunits; this bridge is implicated in subunit movement. Contacts the P site tRNA; the 5S rRNA and some of its associated proteins might help stabilize positioning of ribosome-bound tRNAs. In Rhizobium etli (strain ATCC 51251 / DSM 11541 / JCM 21823 / NBRC 15573 / CFN 42), this protein is Large ribosomal subunit protein uL5.